The primary structure comprises 375 residues: DNA replication and repair protein RecF (375 aa).

Position 30–37 (30–37 (GLNGQGKT)) interacts with ATP.

The protein belongs to the RecF family.

It localises to the cytoplasm. Functionally, the RecF protein is involved in DNA metabolism; it is required for DNA replication and normal SOS inducibility. RecF binds preferentially to single-stranded, linear DNA. It also seems to bind ATP. The protein is DNA replication and repair protein RecF of Halothermothrix orenii (strain H 168 / OCM 544 / DSM 9562).